The chain runs to 131 residues: Global transcriptional regulator Spx 2 (131 aa).

Cys-10 and Cys-13 are oxidised to a cystine.

The protein belongs to the ArsC family. Spx subfamily. Interacts with the C-terminal domain of the alpha subunit of the RNAP.

It localises to the cytoplasm. Functionally, global transcriptional regulator that plays a key role in stress response and exerts either positive or negative regulation of genes. Acts by interacting with the C-terminal domain of the alpha subunit of the RNA polymerase (RNAP). This interaction can enhance binding of RNAP to the promoter region of target genes and stimulate their transcription, or block interaction of RNAP with activator. This is Global transcriptional regulator Spx 2 from Bacillus cereus (strain ATCC 14579 / DSM 31 / CCUG 7414 / JCM 2152 / NBRC 15305 / NCIMB 9373 / NCTC 2599 / NRRL B-3711).